The sequence spans 44 residues: Photosystem I reaction center subunit IX (44 aa).

A helical transmembrane segment spans residues 7–27 (YLSVAPVLTTLWFGSLAGLLI).

This sequence belongs to the PsaJ family.

It localises to the plastid. The protein resides in the chloroplast thylakoid membrane. Its function is as follows. May help in the organization of the PsaE and PsaF subunits. This chain is Photosystem I reaction center subunit IX, found in Drimys granadensis.